The following is a 342-amino-acid chain: Ubiquitin fusion degradation protein 1 homolog (342 aa).

Disordered regions lie at residues 245–276 (FGGA…SNAA) and 318–342 (EKEA…RGAR). The span at 259 to 275 (SSSVSLSDGTGVSTSNA) shows a compositional bias: polar residues.

Belongs to the UFD1 family. In terms of assembly, forms a complex composed of ubxn-3, ufd-1, npl-4.1 and cdc-48.1; within the complex interacts with cdc-48.1. Interacts with cdc-48.2. Interacts with npl-4.1 and/or npl-4.2.

Its subcellular location is the cytoplasm. The protein resides in the nucleus. Its function is as follows. Functions at a post-ubiquitination step in the ubiquitin fusion degradation (UFD) pathway. In association with npl-4.1 and/or npl-4.2 and ATPase cdc-48.1 and/or cdc-48.2, involved in the cytoplasmic elimination of misfolded proteins exported from the ER. This pathway, known as ERAD, prevents the activation of the unfolded protein response (UPR) caused by the accumulation of misfolded proteins in the ER. During S phase and in association with npl-4.1 and/or npl-4.2, cdc-48.1 and/or cdc-48.2 and ubxn-3, ensures the degradation of DNA licensing factor cdt-1 after the initiation of DNA replication and thus the disassembly of the DNA replication CMG helicase complex by promoting the dissociation from chromatin of several of its components including cdc-45 and sld-5. Regulates ubxn-3 nuclear localization during S phase. The protein is Ubiquitin fusion degradation protein 1 homolog (ufd-1) of Caenorhabditis elegans.